A 273-amino-acid polypeptide reads, in one-letter code: Probable NAD(P)H dehydrogenase (quinone) FQR1-like 2 (273 aa).

The disordered stretch occupies residues 1–60; sequence MGKGGGCVPSKKKKPATTGDGPGIDDDNDATNAPIQIDDDQTTIDGDRTTATNTGGTTTP. The segment covering 49–60 has biased composition (low complexity); it reads TTATNTGGTTTP. Residues 75–263 enclose the Flavodoxin-like domain; that stretch reads IFVVFYSMYG…ALAEHQGNYM (189 aa). Residues 81-85, 183-236, and His207 each bind FMN; these read SMYGH and FFVS…SPYG. Tyr83 contributes to the NAD(+) binding site.

This sequence belongs to the WrbA family. The cofactor is FMN.

It is found in the cell membrane. The enzyme catalyses a quinone + NADH + H(+) = a quinol + NAD(+). It catalyses the reaction a quinone + NADPH + H(+) = a quinol + NADP(+). Its function is as follows. Catalyzes the transfer of electrons from NADH and NADPH to reduce quinone to the hydroquinone state. This is Probable NAD(P)H dehydrogenase (quinone) FQR1-like 2 from Arabidopsis thaliana (Mouse-ear cress).